The primary structure comprises 113 residues: Cell division topological specificity factor (113 aa).

Belongs to the MinE family.

In terms of biological role, prevents the cell division inhibition by proteins MinC and MinD at internal division sites while permitting inhibition at polar sites. This ensures cell division at the proper site by restricting the formation of a division septum at the midpoint of the long axis of the cell. The sequence is that of Cell division topological specificity factor from Methylobacterium radiotolerans (strain ATCC 27329 / DSM 1819 / JCM 2831 / NBRC 15690 / NCIMB 10815 / 0-1).